The primary structure comprises 286 residues: Ribosome-inactivating protein momordin II (286 aa).

The N-terminal stretch at 1–23 is a signal peptide; the sequence is MVKCLLLSFLIIAIFIGVPTAKG. Glu-181 is an active-site residue.

It belongs to the ribosome-inactivating protein family. Type 1 RIP subfamily.

It carries out the reaction Endohydrolysis of the N-glycosidic bond at one specific adenosine on the 28S rRNA.. The polypeptide is Ribosome-inactivating protein momordin II (Momordica balsamina (Bitter gourd)).